The primary structure comprises 442 residues: Ribosomal protein uS12 methylthiotransferase RimO (442 aa).

The MTTase N-terminal domain occupies 8 to 118 (PKVGFVSLGC…VLGHVHKYVA (111 aa)). [4Fe-4S] cluster-binding residues include C17, C53, C82, C150, C154, and C157. A Radical SAM core domain is found at 136 to 373 (LTPRHYAYLK…MELQQQVSIR (238 aa)). In terms of domain architecture, TRAM spans 376-442 (ARKVGKEMTV…EYDLWASLIG (67 aa)).

This sequence belongs to the methylthiotransferase family. RimO subfamily. [4Fe-4S] cluster is required as a cofactor.

Its subcellular location is the cytoplasm. The catalysed reaction is L-aspartate(89)-[ribosomal protein uS12]-hydrogen + (sulfur carrier)-SH + AH2 + 2 S-adenosyl-L-methionine = 3-methylsulfanyl-L-aspartate(89)-[ribosomal protein uS12]-hydrogen + (sulfur carrier)-H + 5'-deoxyadenosine + L-methionine + A + S-adenosyl-L-homocysteine + 2 H(+). Functionally, catalyzes the methylthiolation of an aspartic acid residue of ribosomal protein uS12. The polypeptide is Ribosomal protein uS12 methylthiotransferase RimO (Aeromonas salmonicida (strain A449)).